A 282-amino-acid polypeptide reads, in one-letter code: Nucleotide-binding protein XCV3122 (282 aa).

5–12 (GLSGSGKS) provides a ligand contact to ATP. 57–60 (DVRS) contacts GTP.

It belongs to the RapZ-like family.

Displays ATPase and GTPase activities. This chain is Nucleotide-binding protein XCV3122, found in Xanthomonas euvesicatoria pv. vesicatoria (strain 85-10) (Xanthomonas campestris pv. vesicatoria).